A 592-amino-acid chain; its full sequence is uncharacterized protein (592 aa).

The next 6 helical transmembrane spans lie at 12–32 (IWIL…IFLL), 58–78 (PILF…ISLV), 102–122 (MGLF…SYYL), 191–211 (ISYT…GVEI), 214–234 (MMVF…FWLG), and 299–319 (FSGF…LIQV). The region spanning 58 to 358 (PILFFLLIVA…FRSTYDNFAS (301 aa)) is the ABC transmembrane type-1 domain. In terms of domain architecture, ABC transporter spans 391–592 (VIFKNLSIQN…LQDKGQWQVL (202 aa)). ATP is bound at residue 424–431 (GKSGAGKT).

This sequence belongs to the ABC transporter superfamily.

It localises to the cell inner membrane. This is an uncharacterized protein from Haemophilus influenzae (strain ATCC 51907 / DSM 11121 / KW20 / Rd).